We begin with the raw amino-acid sequence, 257 residues long: Acetylglutamate kinase (257 aa).

Substrate contacts are provided by residues 43 to 44 (GG), Arg-65, and Asn-157. Residues 180 to 185 (DVSGIL) and 208 to 210 (IIT) each bind ATP.

This sequence belongs to the acetylglutamate kinase family. ArgB subfamily. Homodimer.

It localises to the cytoplasm. The catalysed reaction is N-acetyl-L-glutamate + ATP = N-acetyl-L-glutamyl 5-phosphate + ADP. The protein operates within amino-acid biosynthesis; L-arginine biosynthesis; N(2)-acetyl-L-ornithine from L-glutamate: step 2/4. Functionally, catalyzes the ATP-dependent phosphorylation of N-acetyl-L-glutamate. The protein is Acetylglutamate kinase of Enterobacter sp. (strain 638).